Reading from the N-terminus, the 907-residue chain is Protein translocase subunit SecA (907 aa).

Residues Q86, 104–108, and D511 each bind ATP; that span reads GEGKT. Basic and acidic residues-rich tracts occupy residues 838–856 and 869–888; these read AQEE…HESV and EEAP…KRND. A disordered region spans residues 838–907; that stretch reads AQEEWKESMS…YKQCHGKVVD (70 aa). Residues C890, C892, C901, and H902 each contribute to the Zn(2+) site. The span at 896-907 shows a compositional bias: basic residues; that stretch reads KKYKQCHGKVVD.

The protein belongs to the SecA family. In terms of assembly, monomer and homodimer. Part of the essential Sec protein translocation apparatus which comprises SecA, SecYEG and auxiliary proteins SecDF-YajC and YidC. Zn(2+) is required as a cofactor.

The protein localises to the cell inner membrane. It is found in the cytoplasm. It carries out the reaction ATP + H2O + cellular proteinSide 1 = ADP + phosphate + cellular proteinSide 2.. Its function is as follows. Part of the Sec protein translocase complex. Interacts with the SecYEG preprotein conducting channel. Has a central role in coupling the hydrolysis of ATP to the transfer of proteins into and across the cell membrane, serving both as a receptor for the preprotein-SecB complex and as an ATP-driven molecular motor driving the stepwise translocation of polypeptide chains across the membrane. This Francisella philomiragia subsp. philomiragia (strain ATCC 25017 / CCUG 19701 / FSC 153 / O#319-036) protein is Protein translocase subunit SecA.